Here is a 511-residue protein sequence, read N- to C-terminus: GMP synthase [glutamine-hydrolyzing] (511 aa).

The 191-residue stretch at 5–195 (MILVLDFGGQ…LYNICGCKGD (191 aa)) folds into the Glutamine amidotransferase type-1 domain. The active-site Nucleophile is the Cys82. Catalysis depends on residues His169 and Glu171. One can recognise a GMPS ATP-PPase domain in the interval 196–386 (WKMSSFVENS…LGIPEDLVWR (191 aa)). Position 223-229 (223-229 (SGGVDSS)) interacts with ATP.

In terms of assembly, homodimer.

The enzyme catalyses XMP + L-glutamine + ATP + H2O = GMP + L-glutamate + AMP + diphosphate + 2 H(+). It functions in the pathway purine metabolism; GMP biosynthesis; GMP from XMP (L-Gln route): step 1/1. Functionally, catalyzes the synthesis of GMP from XMP. This Ruminiclostridium cellulolyticum (strain ATCC 35319 / DSM 5812 / JCM 6584 / H10) (Clostridium cellulolyticum) protein is GMP synthase [glutamine-hydrolyzing].